The sequence spans 316 residues: Epoxide hydrolase 2 (316 aa).

In terms of domain architecture, AB hydrolase-1 spans 25–302; sequence PAVLFLHGFP…AAHFINQERP (278 aa). Catalysis depends on D101, which acts as the Nucleophile. Y150 is a binding site for an epoxide. The active-site Proton donor is the Y230. Residue H295 is the Proton acceptor of the active site.

This sequence belongs to the AB hydrolase superfamily. Epoxide hydrolase family. As to quaternary structure, homodimer. As to expression, highly expressed in young fruits 15 days after anthesis (15-DAA). Also observed in stems and leaves.

The catalysed reaction is an epoxide + H2O = an ethanediol. It carries out the reaction (24S)-24,25-epoxycucurbitadienol + H2O = (24R)-24,25-dihydroxycucurbitadienol. It participates in secondary metabolite biosynthesis; terpenoid biosynthesis. Its function is as follows. Epoxide hydrolase involved in the biosynthesis of cucurbitacin and mogroside tetracyclic triterpene natural products (e.g. siamenoside I and mogrosides IV, V and VI). Cucurbitacins have cytotoxic properties and exhibit deterrent taste as a defense barrier against herbivores. Mogrosides are nonsugar highly oxygenated compounds used as high-intensity zero-calorie sweeteners; they also possess pharmacological properties such as regulating immunity, lowering blood sugar and lipid levels, protecting the liver, and acting as antioxidants and antitumor agents. Catalyzes the hydrolysis of aromatic epoxide-containing substrates, such as the conversion of 24,25-epoxycucurbitadienol to 24,25-dihydroxycucurbitadienol. This chain is Epoxide hydrolase 2, found in Siraitia grosvenorii (Monk's fruit).